The sequence spans 69 residues: Putative membrane protein insertion efficiency factor (69 aa).

This sequence belongs to the UPF0161 family.

Its subcellular location is the cell inner membrane. Its function is as follows. Could be involved in insertion of integral membrane proteins into the membrane. This Syntrophotalea carbinolica (strain DSM 2380 / NBRC 103641 / GraBd1) (Pelobacter carbinolicus) protein is Putative membrane protein insertion efficiency factor.